A 227-amino-acid chain; its full sequence is Octanoyltransferase (227 aa).

Residues 35 to 222 (EAYENRIIMC…ELGRLLNEKK (188 aa)) enclose the BPL/LPL catalytic domain. Substrate-binding positions include 80 to 87 (RGGDITYH), 152 to 154 (AIG), and 165 to 167 (GLA). Cys183 (acyl-thioester intermediate) is an active-site residue.

Belongs to the LipB family.

It localises to the cytoplasm. The enzyme catalyses octanoyl-[ACP] + L-lysyl-[protein] = N(6)-octanoyl-L-lysyl-[protein] + holo-[ACP] + H(+). Its pathway is protein modification; protein lipoylation via endogenous pathway; protein N(6)-(lipoyl)lysine from octanoyl-[acyl-carrier-protein]: step 1/2. In terms of biological role, catalyzes the transfer of endogenously produced octanoic acid from octanoyl-acyl-carrier-protein onto the lipoyl domains of lipoate-dependent enzymes. Lipoyl-ACP can also act as a substrate although octanoyl-ACP is likely to be the physiological substrate. This Bacteroides thetaiotaomicron (strain ATCC 29148 / DSM 2079 / JCM 5827 / CCUG 10774 / NCTC 10582 / VPI-5482 / E50) protein is Octanoyltransferase.